The sequence spans 338 residues: 4-hydroxythreonine-4-phosphate dehydrogenase (338 aa).

His139 and Thr140 together coordinate substrate. Residues His169, His214, and His270 each contribute to the a divalent metal cation site. Substrate-binding residues include Lys278, Asn287, and Arg296.

The protein belongs to the PdxA family. Homodimer. It depends on Zn(2+) as a cofactor. The cofactor is Mg(2+). Co(2+) serves as cofactor.

It is found in the cytoplasm. The catalysed reaction is 4-(phosphooxy)-L-threonine + NAD(+) = 3-amino-2-oxopropyl phosphate + CO2 + NADH. The protein operates within cofactor biosynthesis; pyridoxine 5'-phosphate biosynthesis; pyridoxine 5'-phosphate from D-erythrose 4-phosphate: step 4/5. Functionally, catalyzes the NAD(P)-dependent oxidation of 4-(phosphooxy)-L-threonine (HTP) into 2-amino-3-oxo-4-(phosphooxy)butyric acid which spontaneously decarboxylates to form 3-amino-2-oxopropyl phosphate (AHAP). The polypeptide is 4-hydroxythreonine-4-phosphate dehydrogenase (Desulfosudis oleivorans (strain DSM 6200 / JCM 39069 / Hxd3) (Desulfococcus oleovorans)).